Here is a 365-residue protein sequence, read N- to C-terminus: Peptide chain release factor 2 (365 aa).

At Q252 the chain carries N5-methylglutamine.

Belongs to the prokaryotic/mitochondrial release factor family. Post-translationally, methylated by PrmC. Methylation increases the termination efficiency of RF2.

It localises to the cytoplasm. In terms of biological role, peptide chain release factor 2 directs the termination of translation in response to the peptide chain termination codons UGA and UAA. This is Peptide chain release factor 2 from Pseudoalteromonas translucida (strain TAC 125).